The chain runs to 323 residues: Cyclin-H (323 aa).

Serine 5 bears the Phosphoserine; by CDK8 mark. Phosphoserine is present on serine 132. The interval 296–323 is disordered; it reads GYEDDDYVSKKPKQEEEEWTDDDLVDAL. Serine 304 carries the post-translational modification Phosphoserine; by CDK8. A compositionally biased stretch (acidic residues) spans 310 to 323; sequence EEEEWTDDDLVDAL. Phosphothreonine is present on threonine 315.

Belongs to the cyclin family. Cyclin C subfamily. In terms of assembly, associates primarily with CDK7 and MAT1 to form the CAK complex. CAK can further associate with the core-TFIIH to form the TFIIH basal transcription factor.

It localises to the nucleus. Regulates CDK7, the catalytic subunit of the CDK-activating kinase (CAK) enzymatic complex. CAK activates the cyclin-associated kinases CDK1, CDK2, CDK4 and CDK6 by threonine phosphorylation. CAK complexed to the core-TFIIH basal transcription factor activates RNA polymerase II by serine phosphorylation of the repetitive C-terminal domain (CTD) of its large subunit (POLR2A), allowing its escape from the promoter and elongation of the transcripts. Involved in cell cycle control and in RNA transcription by RNA polymerase II. Its expression and activity are constant throughout the cell cycle. This Rattus norvegicus (Rat) protein is Cyclin-H (Ccnh).